A 610-amino-acid polypeptide reads, in one-letter code: Elongation factor 4 (610 aa).

The region spanning 13 to 195 (SHIRNFSIVA…AIVNRLPAPK (183 aa)) is the tr-type G domain. Residues 25–30 (DHGKST) and 142–145 (NKID) each bind GTP.

The protein belongs to the TRAFAC class translation factor GTPase superfamily. Classic translation factor GTPase family. LepA subfamily.

The protein resides in the cell inner membrane. It carries out the reaction GTP + H2O = GDP + phosphate + H(+). Required for accurate and efficient protein synthesis under certain stress conditions. May act as a fidelity factor of the translation reaction, by catalyzing a one-codon backward translocation of tRNAs on improperly translocated ribosomes. Back-translocation proceeds from a post-translocation (POST) complex to a pre-translocation (PRE) complex, thus giving elongation factor G a second chance to translocate the tRNAs correctly. Binds to ribosomes in a GTP-dependent manner. This is Elongation factor 4 from Rhizobium leguminosarum bv. trifolii (strain WSM2304).